The following is a 663-amino-acid chain: Transmembrane 9 superfamily member 2 (663 aa).

A signal peptide spans 1–28 (MSSRPPASLPARGPRLLLLSLLLLGTVP). Residues 29 to 300 (GPRPGSAFYL…LESMPHTHIQ (272 aa)) are Lumenal-facing. Residues 301 to 321 (WFSIMNSLVIVLFLSGMVAMI) form a helical membrane-spanning segment. At 322–374 (MLRTLHKDIARYNQMDSTEDAQEEFGWKLVHGDIFRPPRKGMLLSVFLGSGTQ) the chain is on the cytoplasmic side. Residues 375-395 (ILIMTFVTLFFACLGFLSPAN) traverse the membrane as a helical segment. The Lumenal segment spans residues 396 to 398 (RGA). Residues 399–419 (LMTCAVVLWVLLGTPAGYVAA) form a helical membrane-spanning segment. The Cytoplasmic portion of the chain corresponds to 420–437 (RFYKSFGGEKWKTNVLLT). A helical membrane pass occupies residues 438 to 458 (SFLCPGIVFADFFIMNLILWG). Residues 459-466 (EGSSAAIP) are Lumenal-facing. Residues 467-487 (FGTLVAILALWFCISVPLTFI) form a helical membrane-spanning segment. The Cytoplasmic portion of the chain corresponds to 488–522 (GAYFGFKKNAIEHPVRTNQIPRQIPEQSFYTKPLP). The helical transmembrane segment at 523-543 (GIIMGGILPFGCIFIQLFFIL) threads the bilayer. The Lumenal portion of the chain corresponds to 544–554 (NSIWSHQMYYM). The helical transmembrane segment at 555 to 575 (FGFLFLVFIILVITCSEATIL) threads the bilayer. At 576 to 591 (LCYFHLCAEDYHWQWR) the chain is on the cytoplasmic side. The helical transmembrane segment at 592 to 612 (SFLTSGFTAVYFLVYAIHYFF) threads the bilayer. Topologically, residues 613–631 (SKLQITGTASTILYFGYTM) are lumenal. Residues 632-652 (IMVLIFFLFTGTIGFFACFWF) form a helical membrane-spanning segment. At 653 to 663 (VTKIYSVVKVD) the chain is on the cytoplasmic side.

The protein belongs to the nonaspanin (TM9SF) (TC 9.A.2) family.

The protein localises to the endosome membrane. It is found in the golgi outpost. Its subcellular location is the cytoplasm. It localises to the cytoskeleton. The protein resides in the microtubule organizing center. Functionally, in the intracellular compartments, may function as a channel or small molecule transporter. This chain is Transmembrane 9 superfamily member 2 (Tm9sf2), found in Rattus norvegicus (Rat).